Reading from the N-terminus, the 1132-residue chain is Fas-binding factor 1 homolog (1132 aa).

Disordered regions lie at residues 18–50, 65–84, and 89–570; these read DDLL…LQAS, AEDM…PQAV, and KEMD…QSYE. Over residues 35-46 the composition is skewed to low complexity; it reads AGVSSGRARGSS. Basic and acidic residues-rich tracts occupy residues 134-148 and 189-206; these read APEK…DKKP and GSER…EKDP. The segment covering 226-235 has biased composition (acidic residues); that stretch reads TFEDDDDDMM. 2 stretches are compositionally biased toward basic and acidic residues: residues 244–270 and 278–303; these read QKGD…DELL and ILER…PEKE. Polar residues-rich tracts occupy residues 331-341 and 388-410; these read RQSVSRFSAEN and AKTS…SKPN. Composition is skewed to low complexity over residues 458 to 480 and 511 to 520; these read ATST…ADSS and PSDPAASSPA. Residues 534–548 are compositionally biased toward polar residues; sequence TMPSTPLQAASQLQA. Coiled coils occupy residues 576-727, 769-882, and 918-1044; these read RAAL…TSAT, ARQR…LAVE, and LAKE…HKKL.

It is found in the cytoplasm. Its subcellular location is the cytoskeleton. The protein localises to the microtubule organizing center. The protein resides in the centrosome. It localises to the centriole. It is found in the spindle pole. Its subcellular location is the cell junction. In terms of biological role, keratin-binding protein required for epithelial cell polarization. Required for ciliogenesis. This Gallus gallus (Chicken) protein is Fas-binding factor 1 homolog (FBF1).